We begin with the raw amino-acid sequence, 160 residues long: 2-C-methyl-D-erythritol 2,4-cyclodiphosphate synthase (160 aa).

Aspartate 11 and histidine 13 together coordinate a divalent metal cation. 4-CDP-2-C-methyl-D-erythritol 2-phosphate is bound by residues 11-13 and 37-38; these read DVH and HS. Histidine 45 contributes to the a divalent metal cation binding site. Residues 59 to 61, 64 to 68, 103 to 109, 135 to 138, phenylalanine 142, and arginine 145 contribute to the 4-CDP-2-C-methyl-D-erythritol 2-phosphate site; these read DIG, FPDTD, AQAPKMA, and TTTE.

The protein belongs to the IspF family. In terms of assembly, homotrimer. The cofactor is a divalent metal cation.

The catalysed reaction is 4-CDP-2-C-methyl-D-erythritol 2-phosphate = 2-C-methyl-D-erythritol 2,4-cyclic diphosphate + CMP. Its pathway is isoprenoid biosynthesis; isopentenyl diphosphate biosynthesis via DXP pathway; isopentenyl diphosphate from 1-deoxy-D-xylulose 5-phosphate: step 4/6. Involved in the biosynthesis of isopentenyl diphosphate (IPP) and dimethylallyl diphosphate (DMAPP), two major building blocks of isoprenoid compounds. Catalyzes the conversion of 4-diphosphocytidyl-2-C-methyl-D-erythritol 2-phosphate (CDP-ME2P) to 2-C-methyl-D-erythritol 2,4-cyclodiphosphate (ME-CPP) with a corresponding release of cytidine 5-monophosphate (CMP). In Thiobacillus denitrificans (strain ATCC 25259 / T1), this protein is 2-C-methyl-D-erythritol 2,4-cyclodiphosphate synthase.